The following is an 881-amino-acid chain: DNA mismatch repair protein MutS (881 aa).

627–634 (GPNMGGKS) lines the ATP pocket.

It belongs to the DNA mismatch repair MutS family.

This protein is involved in the repair of mismatches in DNA. It is possible that it carries out the mismatch recognition step. This protein has a weak ATPase activity. The chain is DNA mismatch repair protein MutS from Acinetobacter baumannii (strain AB307-0294).